The following is a 188-amino-acid chain: Ribosome maturation factor RimM (188 aa).

One can recognise a PRC barrel domain in the interval 112-187 (SDSYYWVDLI…LLTLDWQSDW (76 aa)).

The protein belongs to the RimM family. As to quaternary structure, binds ribosomal protein uS19.

It localises to the cytoplasm. Functionally, an accessory protein needed during the final step in the assembly of 30S ribosomal subunit, possibly for assembly of the head region. Essential for efficient processing of 16S rRNA. May be needed both before and after RbfA during the maturation of 16S rRNA. It has affinity for free ribosomal 30S subunits but not for 70S ribosomes. The sequence is that of Ribosome maturation factor RimM from Polynucleobacter asymbioticus (strain DSM 18221 / CIP 109841 / QLW-P1DMWA-1) (Polynucleobacter necessarius subsp. asymbioticus).